The sequence spans 478 residues: Early growth response protein 4 (478 aa).

The interval 15–37 (SKPTEGCAHTSPELPRLPARDAP) is disordered. 3 C2H2-type zinc fingers span residues 372 to 396 (FACPVESCVRTFARSDELNRHLRIH), 402 to 424 (FQCRICLRNFSRSDHLTTHVRTH), and 430 to 452 (FACDVCGRRFARSDEKKRHSKVH).

Belongs to the EGR C2H2-type zinc-finger protein family.

It localises to the nucleus. Transcriptional regulator. Recognizes and binds to the DNA sequence 5'-GCGGGGGCG-3' (GSG). Activates the transcription of target genes whose products are required for mitogenesis and differentiation. This Rattus norvegicus (Rat) protein is Early growth response protein 4 (Egr4).